The sequence spans 776 residues: MGKKNKSNGGGNTNNTPTKTPSKPPVKFNDKWASIENGEAKSASVSHYKEPSKEPKFVHPAKLAKEKKIFDGLDIPERVLAHGKVVEQNGGKKRRHREISPKMEAKKPKVESKSKDGVAAKKAHKHFTVSSEVVQSTYFFEEPDNGNEVTLVSNGKETTIEKTVILDEEVEDEEIDEEEFEDEEEVEDEEGMDEDETEIDESEMIVDPKDIERCIEFEDVDDEDEMEDEEEFEDEEEVEDEEVDDEEEEEVADEERGEEQEDEQEEEEEVSDEESVVSEMDADSDDEGFIAGKDREAHVISKDKAARTFAAKPVDFDAFPFNDQDSVVTASRAFGFMVSPCDVQTFFDKFYQSNVLVVHRKTPAYYGNLFSTTRFSELLEKHYLEYNMNINIAQYKDGIRTTLNGKGRVYPQIVKQHLHNLCSVQLVNPQTFDDRIWYLCEILQEQFGCFVGANTYLTPAGSSGFAPHWDEIDAFLLQVEGRKYWRVWAPESAEEELPLESSGNFTEDDMKGKEPVFEGWIEQGDMIYIPRGYTHQARTDKKVHSLHVTVSTGRQWSFANLMEKVIPEAVGALTEERHKLRRGLPIGLFDMGGVVDLDYSQEEHFTEKFKIVVDRHMSRLRNLVADHLLDSSVDSMTKEFMKQALPPILTDKEKKRSVIGLSTNLLGDDLIDFCANTKVKFIRKHTQRLLMESEDSCFISHRMNNSRLFEGRPETLVDFPSTGIDTYRVLWNAYPEWRTLDEIFSCRETKSNTRKEKLAAIQILFQMGVLLVKNPK.

3 disordered regions span residues 1-57 (MGKK…EPKF), 87-126 (EQNG…AHKH), and 165-288 (ILDE…DDEG). Basic and acidic residues-rich tracts occupy residues 47-57 (HYKEPSKEPKF) and 98-119 (EISP…DGVA). Acidic residues predominate over residues 166-204 (LDEEVEDEEIDEEEFEDEEEVEDEEGMDEDETEIDESEM). Positions 206 to 216 (VDPKDIERCIE) are enriched in basic and acidic residues. Positions 217–288 (FEDVDDEDEM…EMDADSDDEG (72 aa)) are enriched in acidic residues. The JmjC domain occupies 425-569 (QLVNPQTFDD…NLMEKVIPEA (145 aa)). Positions 468, 470, and 535 each coordinate Fe cation.

Belongs to the ROX family. NO66 subfamily. Requires Fe(2+) as cofactor.

The protein resides in the nucleus. It carries out the reaction N(6),N(6)-dimethyl-L-lysyl(36)-[histone H3] + 2 2-oxoglutarate + 2 O2 = L-lysyl(36)-[histone H3] + 2 formaldehyde + 2 succinate + 2 CO2. In terms of biological role, oxygenase that can act as both a histone lysine demethylase and a ribosomal histidine hydroxylase. Specifically demethylates 'Lys-4' (H3K4me) and 'Lys-36' (H3K36me) of histone H3, thereby playing a central role in histone code. This Caenorhabditis briggsae protein is Bifunctional lysine-specific demethylase and histidyl-hydroxylase NO66 (jmjc-1).